The following is a 241-amino-acid chain: Thyroid transcription factor 1-associated protein 26 (241 aa).

Disordered stretches follow at residues 1–22 (MAPV…GEGV) and 182–205 (KRAA…RQYK). Residues 186–202 (KKQEFERRKQEREEAQR) are compositionally biased toward basic and acidic residues.

The protein belongs to the TAP26 family. As to quaternary structure, interacts with NKX2-1. In terms of tissue distribution, ubiquitously expressed. In lung, expression is restricted to the alveolar epithelial cells.

The protein resides in the nucleus. Functionally, component of the transcription complexes of the pulmonary surfactant-associated protein-B (SFTPB) and -C (SFTPC). Enhances homeobox protein Nkx-2.1-activated SFTPB and SFTPC promoter activities. The sequence is that of Thyroid transcription factor 1-associated protein 26 (CCDC59) from Homo sapiens (Human).